Consider the following 424-residue polypeptide: Calreticulin-3 (424 aa).

The first 28 residues, 1-28 (MGLPQNKLSFFCFFFLVSVLTLAPLAFS), serve as a signal peptide directing secretion. Asn97 carries an N-linked (GlcNAc...) asparagine glycan. Cys114 and Cys146 are joined by a disulfide. Tyr118, Lys120, Tyr137, and Asp144 together coordinate an alpha-D-glucoside. A run of 7 repeats spans residues 200–211 (REFGSMYTDWDI), 219–230 (VKNAKKPEDWDD), 236–247 (DPNDVKPEGFDS), 254–265 (DRKAKEPEDWDE), 269–279 (GLWEPPKIPNS), 283–293 (GPWKAKRIKNP), and 297–307 (GKWKNPWIDNP). The 4 X approximate repeats stretch occupies residues 200-265 (REFGSMYTDW…KAKEPEDWDE (66 aa)). Residues 228-237 (WDDREYIDDP) are compositionally biased toward acidic residues. The disordered stretch occupies residues 228–275 (WDDREYIDDPNDVKPEGFDSIPREIPDRKAKEPEDWDEEENGLWEPPK). A compositionally biased stretch (basic and acidic residues) spans 238 to 260 (NDVKPEGFDSIPREIPDRKAKEP). The segment at 269–307 (GLWEPPKIPNSAYKGPWKAKRIKNPNYKGKWKNPWIDNP) is 3 X approximate repeats. Residue Glu327 participates in an alpha-D-glucoside binding. Residues 368-401 (FAEAEKERKAREDEEARIAREEGERRRKERDHRY) are compositionally biased toward basic and acidic residues. Residues 368-424 (FAEAEKERKAREDEEARIAREEGERRRKERDHRYGDRRRRYKRPNPRDYMDDYHDEL) form a disordered region. A compositionally biased stretch (basic residues) spans 402-411 (GDRRRRYKRP). Basic and acidic residues predominate over residues 412–424 (NPRDYMDDYHDEL). The Prevents secretion from ER motif lies at 421-424 (HDEL).

This sequence belongs to the calreticulin family.

It is found in the endoplasmic reticulum lumen. Its function is as follows. Molecular calcium-binding chaperone promoting folding, oligomeric assembly and quality control in the ER via the calreticulin/calnexin cycle. This lectin may interact transiently with almost all of the monoglucosylated glycoproteins that are synthesized in the ER. Required for elongation factor Tu receptor (EFR) accumulation and for EFR, but not flagellin-sensing 2 (FLS2) signaling. This chain is Calreticulin-3 (CRT3), found in Arabidopsis thaliana (Mouse-ear cress).